The sequence spans 138 residues: Large ribosomal subunit protein uL16 (138 aa).

Basic residues predominate over residues 1-15 (MLSPRKVKYRKKQRG). Residues 1 to 21 (MLSPRKVKYRKKQRGRLSGEA) form a disordered region.

It belongs to the universal ribosomal protein uL16 family. Part of the 50S ribosomal subunit.

Its function is as follows. Binds 23S rRNA and is also seen to make contacts with the A and possibly P site tRNAs. This is Large ribosomal subunit protein uL16 from Borrelia duttonii (strain Ly).